The following is a 623-amino-acid chain: Glutathione import ATP-binding protein GsiA (623 aa).

ABC transporter domains lie at 15-269 (VENL…RALL) and 314-564 (LRVR…RKLL). ATP-binding positions include 49–56 (GESGSGKS) and 357–364 (GESGSGKS).

Belongs to the ABC transporter superfamily. Glutathione importer (TC 3.A.1.5.11) family. The complex is composed of two ATP-binding proteins (GsiA), two transmembrane proteins (GsiC and GsiD) and a solute-binding protein (GsiB).

It localises to the cell inner membrane. It carries out the reaction glutathione(out) + ATP + H2O = glutathione(in) + ADP + phosphate + H(+). In terms of biological role, part of the ABC transporter complex GsiABCD involved in glutathione import. Responsible for energy coupling to the transport system. This is Glutathione import ATP-binding protein GsiA from Shigella flexneri.